The chain runs to 86 residues: Neurotoxin 8-related gene product 1/2/3 (86 aa).

Positions 1–19 (MNYLTMISLALLVMTGVES) are cleaved as a signal peptide. The region spanning 22–84 (RDAYIADNKN…VPIKVPGKCN (63 aa)) is the LCN-type CS-alpha/beta domain. 4 disulfides stabilise this stretch: Cys32–Cys83, Cys36–Cys56, Cys42–Cys66, and Cys46–Cys68. Asn84 is modified (asparagine amide).

This sequence belongs to the long (4 C-C) scorpion toxin superfamily. Sodium channel inhibitor family. Alpha subfamily. As to expression, expressed by the venom gland.

It localises to the secreted. Functionally, binds voltage-dependently at site-3 of sodium channels (Nav) and inhibits the inactivation of the activated channels, thereby blocking neuronal transmission. The protein is Neurotoxin 8-related gene product 1/2/3 (NTVIIIrgp1) of Androctonus mauritanicus mauritanicus (Scorpion).